The chain runs to 370 residues: MTVRNIASICNMGTNASALEKDIGPEQFPINEHYFGLVNFGNTCYCNSVLQALYFCRPFRENVLAYKVQQKKKENLLTCLADLFHSIATQKKKVGVIPPKKFISRLRKENDLFDNYMQQDAHEFLNYLLNTVADILQEERKQEKQNGRLKNNGTAIATDTEPEQNKIDPTWVHEIFQGTLTNETRCLNCETVSSKDEDFLDLSVDVEQNTSITHCLRDFSNTETLCSEYKYYCEMCCSKQEAQKRMRVKKLPMILALHLKRFKYMEQLHRYTKLSYRVVFPLELRLFNTSGDAVNLDRMYDLVAVVVHCGSGPNRGHYITIVKSHGFWLLFDDDIVEKIDAQAIEEFYGLTSDISKNSESGYILFYQSRE.

The USP domain maps to 35–369 (FGLVNFGNTC…SGYILFYQSR (335 aa)). The active-site Nucleophile is Cys44. Zn(2+) contacts are provided by Cys186, Cys189, Cys233, and Cys236. His317 functions as the Proton acceptor in the catalytic mechanism.

Belongs to the peptidase C19 family. USP12/USP46 subfamily. In terms of assembly, interacts with WDR48.

The catalysed reaction is Thiol-dependent hydrolysis of ester, thioester, amide, peptide and isopeptide bonds formed by the C-terminal Gly of ubiquitin (a 76-residue protein attached to proteins as an intracellular targeting signal).. Deubiquitinating enzyme that plays a role in behavior, possibly by regulating GABA action. Has almost no deubiquitinating activity by itself and requires the interaction with wdr48 to have a high activity. The polypeptide is Ubiquitin carboxyl-terminal hydrolase 46 (usp46) (Danio rerio (Zebrafish)).